The sequence spans 78 residues: Acyl carrier protein (78 aa).

Residues Met-1–Lys-76 enclose the Carrier domain. The residue at position 36 (Ser-36) is an O-(pantetheine 4'-phosphoryl)serine.

The protein belongs to the acyl carrier protein (ACP) family. In terms of processing, 4'-phosphopantetheine is transferred from CoA to a specific serine of apo-ACP by AcpS. This modification is essential for activity because fatty acids are bound in thioester linkage to the sulfhydryl of the prosthetic group.

Its subcellular location is the cytoplasm. Its pathway is lipid metabolism; fatty acid biosynthesis. Its function is as follows. Carrier of the growing fatty acid chain in fatty acid biosynthesis. This is Acyl carrier protein from Helicobacter pylori (strain Shi470).